The following is a 105-amino-acid chain: MRGGGNMQQMMKQMQKMQKKMAQEQEKLKEERVAGTAGGGMVTVTVTGHKEVVDVEIKEEAVDPEDIEMLQDLVLAATNEAMNKADELTQQRLGKHTQGLNIPGM.

Residues 1–40 (MRGGGNMQQMMKQMQKMQKKMAQEQEKLKEERVAGTAGGG) form a disordered region. Low complexity predominate over residues 7–16 (MQQMMKQMQK). The segment covering 21–33 (MAQEQEKLKEERV) has biased composition (basic and acidic residues).

Belongs to the YbaB/EbfC family. In terms of assembly, homodimer.

It localises to the cytoplasm. The protein localises to the nucleoid. In terms of biological role, binds to DNA and alters its conformation. May be involved in regulation of gene expression, nucleoid organization and DNA protection. This is Nucleoid-associated protein SE_2306 from Staphylococcus epidermidis (strain ATCC 12228 / FDA PCI 1200).